The chain runs to 224 residues: Oxygen-evolving enhancer protein 3-1, chloroplastic (224 aa).

A chloroplast-targeting transit peptide spans 1–44 (MASMGGLHGASPAVLEGSLKINGSSRLNGSGRVAVAQRSRLVVR). Residues 45–75 (AQQSEETSRRSVIGLVAAGLAGGSFVQAVLA) constitute a thylakoid transit peptide. Thr-189 bears the Phosphothreonine mark. Phosphotyrosine is present on Tyr-209. A Phosphothreonine modification is found at Thr-212.

This sequence belongs to the PsbQ family. As to expression, expressed in green tissue, with high steady-state mRNA levels in leaves. Not expressed in roots.

It localises to the plastid. Its subcellular location is the chloroplast thylakoid membrane. Required for photosystem II assembly/stability and photoautotrophic growth under low light conditions. This chain is Oxygen-evolving enhancer protein 3-1, chloroplastic (PSBQ1), found in Arabidopsis thaliana (Mouse-ear cress).